Reading from the N-terminus, the 775-residue chain is Cation channel sperm-associated protein subunit epsilon-like protein (775 aa).

The N-terminal stretch at 1 to 20 (MLARRVVAALLLWLSCCVSA) is a signal peptide. 2 N-linked (GlcNAc...) asparagine glycosylation sites follow: Asn62 and Asn114.

This sequence belongs to the CATSPERD family.

The chain is Cation channel sperm-associated protein subunit epsilon-like protein from Mus musculus (Mouse).